Consider the following 567-residue polypeptide: Glutamate--tRNA ligase (567 aa).

The 'HIGH' region signature appears at 106-116; the sequence is PNPDGPLHLGN.

Belongs to the class-I aminoacyl-tRNA synthetase family. Glutamate--tRNA ligase type 2 subfamily.

It localises to the cytoplasm. It carries out the reaction tRNA(Glu) + L-glutamate + ATP = L-glutamyl-tRNA(Glu) + AMP + diphosphate. Its function is as follows. Catalyzes the attachment of glutamate to tRNA(Glu) in a two-step reaction: glutamate is first activated by ATP to form Glu-AMP and then transferred to the acceptor end of tRNA(Glu). The chain is Glutamate--tRNA ligase from Sulfolobus acidocaldarius (strain ATCC 33909 / DSM 639 / JCM 8929 / NBRC 15157 / NCIMB 11770).